We begin with the raw amino-acid sequence, 229 residues long: Rab-like protein 2A (229 aa).

Residues 28-35, 76-80, and 133-136 each bind GTP; these read GDSAVGKS, DTAGQ, and NKID. The disordered stretch occupies residues 200–229; the sequence is NLEQEEEDVPDQEQSGSIETPSEEVASPHS.

The protein belongs to the small GTPase superfamily. Rab family. In terms of assembly, interacts with IFT27, IFT81, IFT172, ATP6V1E1, HK1, LDHC, MAPRE1 and HSPA2.

Plays an essential role in male fertility, sperm intra-flagellar transport, and tail assembly. Binds, in a GTP-regulated manner, to a specific set of effector proteins including key proteins involved in cilia development and function and delivers them into the growing sperm tail. This chain is Rab-like protein 2A (RABL2A), found in Pongo abelii (Sumatran orangutan).